The primary structure comprises 138 residues: Large ribosomal subunit protein uL16 (138 aa).

It belongs to the universal ribosomal protein uL16 family. Part of the 50S ribosomal subunit.

In terms of biological role, binds 23S rRNA and is also seen to make contacts with the A and possibly P site tRNAs. This is Large ribosomal subunit protein uL16 from Rhodospirillum rubrum (strain ATCC 11170 / ATH 1.1.1 / DSM 467 / LMG 4362 / NCIMB 8255 / S1).